We begin with the raw amino-acid sequence, 132 residues long: Small ribosomal subunit protein uS8 (132 aa).

Belongs to the universal ribosomal protein uS8 family. Part of the 30S ribosomal subunit. Contacts proteins S5 and S12.

Its function is as follows. One of the primary rRNA binding proteins, it binds directly to 16S rRNA central domain where it helps coordinate assembly of the platform of the 30S subunit. In Parvibaculum lavamentivorans (strain DS-1 / DSM 13023 / NCIMB 13966), this protein is Small ribosomal subunit protein uS8.